A 529-amino-acid chain; its full sequence is Chaperonin GroEL, chloroplastic (529 aa).

ATP-binding positions include threonine 29 to proline 32, aspartate 86 to threonine 90, glycine 414, aspartate 480 to alanine 482, and aspartate 496.

This sequence belongs to the chaperonin (HSP60) family. In terms of assembly, forms a cylinder of 14 subunits composed of two heptameric rings stacked back-to-back. Interacts with the co-chaperonin GroES.

The protein resides in the plastid. It is found in the chloroplast. It catalyses the reaction ATP + H2O + a folded polypeptide = ADP + phosphate + an unfolded polypeptide.. Its function is as follows. Together with its co-chaperonin GroES, plays an essential role in assisting protein folding. The GroEL-GroES system forms a nano-cage that allows encapsulation of the non-native substrate proteins and provides a physical environment optimized to promote and accelerate protein folding. This is Chaperonin GroEL, chloroplastic from Guillardia theta (Cryptophyte).